The sequence spans 156 residues: 6,7-dimethyl-8-ribityllumazine synthase (156 aa).

Residues Phe-22, 56–58, and 80–82 contribute to the 5-amino-6-(D-ribitylamino)uracil site; these read AME and AVI. 85–86 contacts (2S)-2-hydroxy-3-oxobutyl phosphate; that stretch reads ET. Catalysis depends on His-88, which acts as the Proton donor. Phe-113 provides a ligand contact to 5-amino-6-(D-ribitylamino)uracil. Arg-127 serves as a coordination point for (2S)-2-hydroxy-3-oxobutyl phosphate.

It belongs to the DMRL synthase family.

It carries out the reaction (2S)-2-hydroxy-3-oxobutyl phosphate + 5-amino-6-(D-ribitylamino)uracil = 6,7-dimethyl-8-(1-D-ribityl)lumazine + phosphate + 2 H2O + H(+). Its pathway is cofactor biosynthesis; riboflavin biosynthesis; riboflavin from 2-hydroxy-3-oxobutyl phosphate and 5-amino-6-(D-ribitylamino)uracil: step 1/2. Catalyzes the formation of 6,7-dimethyl-8-ribityllumazine by condensation of 5-amino-6-(D-ribitylamino)uracil with 3,4-dihydroxy-2-butanone 4-phosphate. This is the penultimate step in the biosynthesis of riboflavin. The sequence is that of 6,7-dimethyl-8-ribityllumazine synthase from Kosmotoga olearia (strain ATCC BAA-1733 / DSM 21960 / TBF 19.5.1).